A 214-amino-acid polypeptide reads, in one-letter code: MRVRNRPGAAEYMAKYPQYVVEGPEKWQGKWQERFGNNHPIHIEIGSGKGRFIYEMAKAHPEINYIGIDMQLSILSIALDKLVADPLPNLQLLRVDGEALTEYFAENEVDLIYLNFSDPWPKKKHEKRRLTYKNFLATDEIILKPNGEIHFKTDNQGLFEYSLSSFSKYGMIIERVWLDLHNSEFEGNIMTEYEEKFSSRGQRIYRVEARFVAK.

Positions 44, 69, 96, and 118 each coordinate S-adenosyl-L-methionine. The active site involves aspartate 118. Substrate is bound at residue lysine 122. An interaction with RNA region spans residues 124 to 129; sequence KHEKRR. Substrate contacts are provided by residues aspartate 154 and 191–194; that span reads TEYE.

This sequence belongs to the class I-like SAM-binding methyltransferase superfamily. TrmB family.

The catalysed reaction is guanosine(46) in tRNA + S-adenosyl-L-methionine = N(7)-methylguanosine(46) in tRNA + S-adenosyl-L-homocysteine. Its pathway is tRNA modification; N(7)-methylguanine-tRNA biosynthesis. In terms of biological role, catalyzes the formation of N(7)-methylguanine at position 46 (m7G46) in tRNA. This Enterococcus faecalis (strain ATCC 700802 / V583) protein is tRNA (guanine-N(7)-)-methyltransferase.